The following is a 299-amino-acid chain: Acetylglutamate kinase (299 aa).

Residues 72–73, R94, and N196 contribute to the substrate site; that span reads GG.

It belongs to the acetylglutamate kinase family. ArgB subfamily.

Its subcellular location is the cytoplasm. It carries out the reaction N-acetyl-L-glutamate + ATP = N-acetyl-L-glutamyl 5-phosphate + ADP. It functions in the pathway amino-acid biosynthesis; L-arginine biosynthesis; N(2)-acetyl-L-ornithine from L-glutamate: step 2/4. In terms of biological role, catalyzes the ATP-dependent phosphorylation of N-acetyl-L-glutamate. This Burkholderia cenocepacia (strain ATCC BAA-245 / DSM 16553 / LMG 16656 / NCTC 13227 / J2315 / CF5610) (Burkholderia cepacia (strain J2315)) protein is Acetylglutamate kinase.